A 504-amino-acid chain; its full sequence is Cytoplasmic dynein 1 light intermediate chain 1 (504 aa).

Residue 35–42 (GDPTSGKS) coordinates ATP. 3 stretches are compositionally biased toward low complexity: residues 167–189 (TTTAATTTTTTTSNNIENNTNKT), 392–425 (NSPSTPSPLSQSSNNNNSNNNINNTSTPSINTPL), and 437–446 (SSNNPVAASP). 3 disordered regions span residues 167–195 (TTTAATTTTTTTSNNIENNTNKTSPTTDK), 383–446 (LDND…AASP), and 464–504 (DKTS…QQKK). Residues 464-473 (DKTSSRKDLK) are compositionally biased toward basic and acidic residues. A compositionally biased stretch (polar residues) spans 475–487 (SLASPPTTSVSSN). Over residues 488 to 504 (AREDAKKELDKLKQQKK) the composition is skewed to basic and acidic residues.

It belongs to the dynein light intermediate chain family. In terms of assembly, homodimer. The cytoplasmic dynein 1 complex consists of two catalytic heavy chains (HCs) and a number of non-catalytic subunits presented by intermediate chains (ICs), light intermediate chains (LICs) and light chains (LCs).

Its subcellular location is the cytoplasm. It localises to the cytoskeleton. Functionally, acts as one of several non-catalytic accessory components of the cytoplasmic dynein 1 complex that are thought to be involved in linking dynein to cargos and to adapter proteins that regulate dynein function. Cytoplasmic dynein 1 acts as a motor for the intracellular retrograde motility of vesicles and organelles along microtubules. May play a role in binding dynein to membranous organelles or chromosomes. The protein is Cytoplasmic dynein 1 light intermediate chain 1 (dync1li1) of Dictyostelium discoideum (Social amoeba).